A 343-amino-acid chain; its full sequence is Putative MO25-like protein At4g17270 (343 aa).

Belongs to the Mo25 family.

This is Putative MO25-like protein At4g17270 from Arabidopsis thaliana (Mouse-ear cress).